We begin with the raw amino-acid sequence, 238 residues long: ATP synthase subunit a (238 aa).

Helical transmembrane passes span 18–38 (LTLL…VFWA), 76–96 (YSLL…LGLF), 114–134 (NLAF…IEGV), 166–186 (SLAI…GLIV), and 193–213 (VYWW…SVFI).

This sequence belongs to the ATPase A chain family. As to quaternary structure, F-type ATPases have 2 components, CF(1) - the catalytic core - and CF(0) - the membrane proton channel. CF(1) has five subunits: alpha(3), beta(3), gamma(1), delta(1), epsilon(1). CF(0) has three main subunits: a(1), b(2) and c(9-12). The alpha and beta chains form an alternating ring which encloses part of the gamma chain. CF(1) is attached to CF(0) by a central stalk formed by the gamma and epsilon chains, while a peripheral stalk is formed by the delta and b chains.

It localises to the cell membrane. In terms of biological role, key component of the proton channel; it plays a direct role in the translocation of protons across the membrane. The chain is ATP synthase subunit a from Streptococcus pyogenes serotype M49 (strain NZ131).